The chain runs to 103 residues: Carboxysome shell protein CcmK3 (103 aa).

Residues 4-91 (AVGVIQTLGF…PPENVLAVLP (88 aa)) enclose the BMC domain.

This sequence belongs to the bacterial microcompartments protein family. CcmK subfamily. As to quaternary structure, forms mixed heterohexamers with CcmK4, probably with 1:5 CcmK3:CcmK4 stoichiometry. Only very weak interactions with CcmK1 and CcmK2 were seen. Bulky residues in the pore region probably preclude the formation of homohexamers by this subunit.

The protein resides in the carboxysome. In terms of biological role, a probably minor shell protein component of the carboxysome, a polyhedral inclusion where RuBisCO (ribulose bisphosphate carboxylase, rbcL-rbcS) is sequestered. This subunit probably does not form homohexamers. This is Carboxysome shell protein CcmK3 from Synechocystis sp. (strain ATCC 27184 / PCC 6803 / Kazusa).